Consider the following 668-residue polypeptide: MANWISSKLKAAETILQQLDQQAADSLRKDEKSETHDEVFETSPKSGSSPVSLKDQLRKKTYEGSDSGSGSQRNSTEQKPSYLSSSKKVRKPDQSHERTSAPSQSLTQDNTKLTDNDWTELLSTPNQRTSTSTSRSPGGTSAIRGLKKDGKRHGNLGKNPLVSDGKKSSSSNVVNSRGRPQKQTNKEPSDKEVSSPSDADMKNRNAPRDIFVNSTHKESEKDVSGKTPPLDDSRRSANETLPRETSPSVGKRDGRESRRSSVWGKQVREEVSQSNVSDGLTRKESSLSSDESESDYESDSSTDSERERQREERRRRRERVFAEKVATKAVAVIKERENMVARLEGEKLSLEKIVEERAKQQAQEAAELQTNMMETLEAADLEKQKHNNTRMEVLTRLAGLEAENAELTRSLAAGQKKLETQIDQVAVLKQQVELKESTLEELKRNTFNIGGRGTTLKQLDTSRGDKFEHQMLEAEISLLTDKIGRLQDKATKLEADIEMMRKELEEPTEVEIELKRRLNQLTDHLIQKQSQVEALSSEKATILFRIEAVSRLIEENKGMSATEASSQDLEAGDWELSGSKFKPAFQDKIRSGKKHLGWLVMQLNAIFISGTVFLRRNPTAKIWAVVYLVCLHLWVLYILLSHSDASSSGELRSGAVISLENFSNSSLQ.

A disordered region spans residues 22–317; it reads QAADSLRKDE…RQREERRRRR (296 aa). Over residues 26 to 39 the composition is skewed to basic and acidic residues; it reads SLRKDEKSETHDEV. 2 stretches are compositionally biased toward polar residues: residues 64 to 86 and 100 to 113; these read GSDS…LSSS and SAPS…NTKL. 2 stretches are compositionally biased toward low complexity: residues 123–141 and 168–178; these read STPN…GGTS and SSSSNVVNSRG. 3 stretches are compositionally biased toward basic and acidic residues: residues 184–207, 215–237, and 250–259; these read TNKE…RNAP, THKE…RRSA, and GKRDGRESRR. Positions 290-302 are enriched in acidic residues; it reads DESESDYESDSST. Positions 303 to 312 are enriched in basic and acidic residues; sequence DSERERQREE. Residues 331-539 are a coiled coil; it reads AVIKERENMV…SQVEALSSEK (209 aa). A run of 2 helical transmembrane segments spans residues 594 to 614 and 622 to 642; these read KHLG…TVFL and IWAV…LLSH.

It is found in the golgi apparatus membrane. In terms of biological role, golgi matrix protein playing a role in tethering of vesicles to Golgi membranes and in maintaining the overall structure of the Golgi apparatus. In Arabidopsis thaliana (Mouse-ear cress), this protein is Golgin candidate 2 (GC2).